The sequence spans 518 residues: Putative cysteine ligase BshC (518 aa).

Positions 404–474 (AAASAERLAA…RARQLTRLKR (71 aa)) form a coiled coil.

The protein belongs to the BshC family.

This Deinococcus geothermalis (strain DSM 11300 / CIP 105573 / AG-3a) protein is Putative cysteine ligase BshC.